A 496-amino-acid chain; its full sequence is MAVKNIVAVDLGASSGRVMLATFHTATQHLTLKEIHRFSNTLVFQDNHHQWDLVALERDILTGLQQIDAMGIAPDSIGVDSWGVDYVLLDKNGQRVGLPYSYRDHRTDGVMAAVTAELGREAIYQHTGIQFLPFNTLYQLKALCDAPPDDLDKVEHLLMIPDYFHYRLTGNLVCEYTNASTTQLLNLEKKTWDGELLDYLGVPRRWLSDPVQPGHAVGNWTAPSGRQIPVTAVATHDTASAVVGAPLQSRDSAYLSSGTWSLMGIESDTPFNSPQALAANITNEGGVDDTYRVLKNIMGLWLLQRVCQERDIKDLGTLIQSATTLPAFVSLINPNDDRFINPPSMHQAIRDYCREHGQPVPQSDAELARCIFDSLALLYRQVVLELGELRHAPIRQLHIVGGGSQNAFLNQLCADVCQIPVLAGPVEASTLGNIGCQLMALGAVTDLAAFRHMLTHNFPLHRYTPRAESDFAGHWRRFQALSQPETAPQGKKETTQ.

An ATP-binding site is contributed by 13–17 (ASSGR). Substrate-binding positions include Gly-83 and 236-238 (HDT). Asp-237 serves as the catalytic Proton acceptor. Thr-259 provides a ligand contact to ATP. Asn-296 lines the substrate pocket. Residue Gln-304 participates in ATP binding. Cys-353 and Cys-370 are oxidised to a cystine. Residue Gly-402 coordinates ATP. Cysteines 413 and 417 form a disulfide.

Belongs to the rhamnulokinase family. Mg(2+) is required as a cofactor.

It carries out the reaction L-rhamnulose + ATP = L-rhamnulose 1-phosphate + ADP + H(+). It functions in the pathway carbohydrate degradation; L-rhamnose degradation; glycerone phosphate from L-rhamnose: step 2/3. Its function is as follows. Involved in the catabolism of L-rhamnose (6-deoxy-L-mannose). Catalyzes the transfer of the gamma-phosphate group from ATP to the 1-hydroxyl group of L-rhamnulose to yield L-rhamnulose 1-phosphate. This Pectobacterium atrosepticum (strain SCRI 1043 / ATCC BAA-672) (Erwinia carotovora subsp. atroseptica) protein is Rhamnulokinase.